Here is a 479-residue protein sequence, read N- to C-terminus: MAQHTVYFPDAFLTQMREAMPSTLSFDDFLAACQRPLRRSIRVNTLKISVADFLQLTAPYGWTLTPIPWCEEGFWIERDNEDALPLGSTAEHLSGLFYIQEASSMLPVAALFADGNAPQRVMDVAAAPGSKTTQISARMNNEGAILANEFSASRVKVLHANISRCGISNVALTHFDGRVFGAAVPEMFDAILLDAPCSGEGVVRKDPDALKNWSPESNQEIAATQRELIDSAFHALRPGGTLVYSTCTLNQEENEAVCLWLKETYPDAVEFLPLGDLFPGANKALTEEGFLHVFPQIYDCEGFFVARLRKTQAIPALPAPKYKVGNFPFSPVKDREAGQIRQAATGVGLNWDENLRLWQRDKELWLFPVGIEALIGKVRFSRLGIKLAETHNKGYRWQHEAVIALASPDNMNAFELTPQEAEEWYRGRDVYPQAAPVADDVLVTFQHQPIGLAKRIGSRLKNSYPRELVRDGKLFTGNA.

S-adenosyl-L-methionine-binding positions include 125-131 (AAAPGSK), E149, D176, and D194. C247 serves as the catalytic Nucleophile.

This sequence belongs to the class I-like SAM-binding methyltransferase superfamily. RsmB/NOP family.

Its subcellular location is the cytoplasm. It carries out the reaction cytidine(1407) in 16S rRNA + S-adenosyl-L-methionine = 5-methylcytidine(1407) in 16S rRNA + S-adenosyl-L-homocysteine + H(+). Functionally, specifically methylates the cytosine at position 1407 (m5C1407) of 16S rRNA. The protein is Ribosomal RNA small subunit methyltransferase F (rsmF) of Escherichia coli (strain K12).